Here is a 445-residue protein sequence, read N- to C-terminus: MGITVLKNEGLDFHARISTPLSEIDDDIQKELLDLTKKVKIPGFRAGKVPVSIVKKKYGTSVRNDIIERRINHSVNHIIKEHNLNIIGRPKIEELQNESDKALEFTVKIELLPKITIPDLKKISLDRPKLEVNSKDVEEQLEKLAALTKNYTKESKAKIKDGDQVTIDAIGYIKEKTFEDGKLNDFKVIIGSNALIPGFEKQLIGSKTGSKVDVNVTFPENYHAKDLAGKDARFVVQIKAVHTAEPTVIDDEFAKKFQSNSLEELRTHFTKQIENESEEAINTIMKMNLFDKLEKLLDFDVPESLLEQEKNILKSGTDKNEQDESLLKDKSSKEITAYYNKLALRRVRIGLLLAEYAKSKNLQLEPDDLRKVIMQQARNFPGQENMIFDFYKNNPRAIEGLKGPALEDKAVQYIFNHEIKLKEKKYTKEELEKYLEAEEQRITLI.

One can recognise a PPIase FKBP-type domain in the interval 162–247 (GDQVTIDAIG…IKAVHTAEPT (86 aa)).

The protein belongs to the FKBP-type PPIase family. Tig subfamily.

Its subcellular location is the cytoplasm. It carries out the reaction [protein]-peptidylproline (omega=180) = [protein]-peptidylproline (omega=0). Involved in protein export. Acts as a chaperone by maintaining the newly synthesized protein in an open conformation. Functions as a peptidyl-prolyl cis-trans isomerase. This chain is Trigger factor, found in Rickettsia rickettsii (strain Sheila Smith).